Reading from the N-terminus, the 639-residue chain is Versicolorin B synthase stcN (639 aa).

Residues 1-19 form the signal peptide; sequence MPAWSLLVLSALPVVGMFA. Residues 77–78 and 98–99 contribute to the FAD site; these read TA and EA. Asparagine 109 carries an N-linked (GlcNAc...) asparagine glycan. Residue 164-167 participates in FAD binding; that stretch reads GAML. Asparagine 214 carries N-linked (GlcNAc...) asparagine glycosylation. The region spanning 263 to 301 is the PAS domain; that stretch reads GFSNGQLLGRSYITHTIHPKTRRRDTASTSYLQTALRTS. N-linked (GlcNAc...) asparagine glycosylation is found at asparagine 444 and asparagine 501. Residues alanine 609 and 620–621 contribute to the FAD site; that span reads PM.

Belongs to the GMC oxidoreductase family. As to quaternary structure, homodimer. It depends on FAD as a cofactor.

Its subcellular location is the cytoplasm. The protein resides in the cytosol. It carries out the reaction (2S-3S)-versiconal hemiacetal = versicolorin B + H2O. The enzyme catalyses (S)-5'-oxoaverantin + H(+) = (1'S,5'S)-averufin + H2O. The protein operates within mycotoxin biosynthesis; sterigmatocystin biosynthesis. In terms of biological role, norsolorinic acid reductase; part of the gene cluster that mediates the biosynthesis of sterigmatocystin (ST), a polyketide-derived furanocoumarin which is part of the most toxic and carcinogenic compounds among the known mycotoxins. The first step in the biosynthesis of sterigmatocystin is the production of hexanoate by the fatty acid synthase (FAS) units stcJ and stcK. The polyketide backbone is assembled by the non-reducing polyketide synthase stcA by condensation of the starter hexanoyl-CoA and 7 malonyl-CoA extender units followed by cyclization and release of norsolorinic acid. Norsolorinic acid is the first stable intermediate in the biosynthesis of sterigmatocystin and is converted into averantin (AVN) by the ketoreductase stcE which reduces the hexanoate ketone to an alcohol. Averantin is then oxidized into 5'-hydroxyaverantin (HAVN) by the cytochrome P450 monooxygenase stcF. 5'-hydroxyaverantin is further converted to 5'-oxyaverantin (OAVN) by the 5'-hydroxyaverantin dehydrogenase stcG. The next step is the conversion of OAVN into averufin (AVF) which is catalyzed by a yet to be identified enzyme. The cytochrome P450 monooxygenase stcB and the flavin-binding monooxygenase stcW are both required for the conversion of averufin to 1-hydroxyversicolorone. The esterase stcI probably catalyzes the formation of versiconal hemiacetal acetate from 1-hydroxyversicolorone. The oxydoreductase stcN then probably catalyzes the biosynthetic step from versiconal to versicolorin B (VERB). The next step is performed by the versicolorin B desaturase stcL to produce versicolorin A (VERA). The ketoreductase stcU and the cytochrome P450 monooxygenase stcS are involved in the conversion of versicolorin A to demethylsterigmatocystin. The Baeyer-Villiger oxidas stcQ and the reductase stcR might be involved in the biosynthetic step from versicolorin A to demethylsterigmatocystin. The final step in the biosynthesis of sterigmatocystin is the methylation of demethylsterigmatocystin catalyzed by the methyltransferase stcP. The polypeptide is Versicolorin B synthase stcN (Emericella nidulans (strain FGSC A4 / ATCC 38163 / CBS 112.46 / NRRL 194 / M139) (Aspergillus nidulans)).